A 195-amino-acid chain; its full sequence is Pyridoxal 5'-phosphate synthase subunit PdxT (195 aa).

46–48 (GES) serves as a coordination point for L-glutamine. The active-site Nucleophile is the Cys-78. L-glutamine is bound by residues Arg-107 and 136–137 (IR). Residues His-173 and Glu-175 each act as charge relay system in the active site.

The protein belongs to the glutaminase PdxT/SNO family. As to quaternary structure, in the presence of PdxS, forms a dodecamer of heterodimers. Only shows activity in the heterodimer.

It catalyses the reaction aldehydo-D-ribose 5-phosphate + D-glyceraldehyde 3-phosphate + L-glutamine = pyridoxal 5'-phosphate + L-glutamate + phosphate + 3 H2O + H(+). The catalysed reaction is L-glutamine + H2O = L-glutamate + NH4(+). It functions in the pathway cofactor biosynthesis; pyridoxal 5'-phosphate biosynthesis. In terms of biological role, catalyzes the hydrolysis of glutamine to glutamate and ammonia as part of the biosynthesis of pyridoxal 5'-phosphate. The resulting ammonia molecule is channeled to the active site of PdxS. This Dehalococcoides mccartyi (strain CBDB1) protein is Pyridoxal 5'-phosphate synthase subunit PdxT.